A 441-amino-acid polypeptide reads, in one-letter code: ATP-dependent protease ATPase subunit HslU (441 aa).

ATP contacts are provided by residues isoleucine 18, 60–65, aspartate 254, glutamate 319, and arginine 391; that span reads GVGKTE.

The protein belongs to the ClpX chaperone family. HslU subfamily. A double ring-shaped homohexamer of HslV is capped on each side by a ring-shaped HslU homohexamer. The assembly of the HslU/HslV complex is dependent on binding of ATP.

Its subcellular location is the cytoplasm. ATPase subunit of a proteasome-like degradation complex; this subunit has chaperone activity. The binding of ATP and its subsequent hydrolysis by HslU are essential for unfolding of protein substrates subsequently hydrolyzed by HslV. HslU recognizes the N-terminal part of its protein substrates and unfolds these before they are guided to HslV for hydrolysis. This chain is ATP-dependent protease ATPase subunit HslU, found in Shewanella piezotolerans (strain WP3 / JCM 13877).